Here is a 102-residue protein sequence, read N- to C-terminus: Heat shock protein HspQ (102 aa).

This sequence belongs to the HspQ family.

The protein localises to the cytoplasm. Its function is as follows. Involved in the degradation of certain denaturated proteins, including DnaA, during heat shock stress. This Pectobacterium atrosepticum (strain SCRI 1043 / ATCC BAA-672) (Erwinia carotovora subsp. atroseptica) protein is Heat shock protein HspQ.